Consider the following 644-residue polypeptide: 3D-(3,5/4)-trihydroxycyclohexane-1,2-dione hydrolase 1 (644 aa).

A thiamine diphosphate-binding site is contributed by Glu65. Positions 442 to 522 are thiamine pyrophosphate binding; sequence SLPGDLQRMW…INVLLFDNSG (81 aa). Mg(2+) is bound by residues Asp493 and Asn520.

Belongs to the TPP enzyme family. It depends on Mg(2+) as a cofactor. The cofactor is thiamine diphosphate.

It catalyses the reaction 3D-3,5/4-trihydroxycyclohexane-1,2-dione + H2O = 5-deoxy-D-glucuronate + H(+). The protein operates within polyol metabolism; myo-inositol degradation into acetyl-CoA; acetyl-CoA from myo-inositol: step 3/7. Its function is as follows. Involved in the cleavage of the C1-C2 bond of 3D-(3,5/4)-trihydroxycyclohexane-1,2-dione (THcHDO) to yield 5-deoxy-glucuronate (5DG). In Bacillus cereus (strain ZK / E33L), this protein is 3D-(3,5/4)-trihydroxycyclohexane-1,2-dione hydrolase 1.